Here is a 199-residue protein sequence, read N- to C-terminus: N-(5'-phosphoribosyl)anthranilate isomerase (199 aa).

This sequence belongs to the TrpF family.

The catalysed reaction is N-(5-phospho-beta-D-ribosyl)anthranilate = 1-(2-carboxyphenylamino)-1-deoxy-D-ribulose 5-phosphate. It functions in the pathway amino-acid biosynthesis; L-tryptophan biosynthesis; L-tryptophan from chorismate: step 3/5. The chain is N-(5'-phosphoribosyl)anthranilate isomerase from Streptococcus pneumoniae (strain Taiwan19F-14).